The following is a 383-amino-acid chain: Cytochrome b (383 aa).

4 consecutive transmembrane segments (helical) span residues 30 to 50, 74 to 96, 109 to 129, and 175 to 195; these read FGSL…LLAM, WILR…CHIG, TWIV…IGYV, and FFSL…AHLL. The heme b site is built by histidine 80 and histidine 94. Residues histidine 179 and histidine 193 each coordinate heme b. Residue histidine 198 coordinates a ubiquinone. The next 4 helical transmembrane spans lie at 221-241, 289-309, 320-340, and 345-365; these read FTIK…IIGI, GVLA…LDRS, AKFF…IGSA, and EPYV…FLVL.

Belongs to the cytochrome b family. The main subunits of complex b-c1 are: cytochrome b, cytochrome c1 and the Rieske protein. The cofactor is heme b.

It localises to the mitochondrion inner membrane. Its function is as follows. Component of the ubiquinol-cytochrome c reductase complex (complex III or cytochrome b-c1 complex) that is part of the mitochondrial respiratory chain. The b-c1 complex mediates electron transfer from ubiquinol to cytochrome c. Contributes to the generation of a proton gradient across the mitochondrial membrane that is then used for ATP synthesis. This is Cytochrome b (mt:Cyt-b) from Trichoplax adhaerens (Trichoplax reptans).